The primary structure comprises 428 residues: Histone deacetylase 3 (428 aa).

Residues 3–316 (KTVAYFYDPD…WTYETSLLVE (314 aa)) are histone deacetylase. 3 residues coordinate 1D-myo-inositol 1,4,5,6-tetrakisphosphate: histidine 17, glycine 21, and lysine 25. The active site involves histidine 135. The Zn(2+) site is built by aspartate 170, histidine 172, and aspartate 259. Residue arginine 265 participates in 1D-myo-inositol 1,4,5,6-tetrakisphosphate binding. 2 stretches are compositionally biased toward basic and acidic residues: residues 388 to 405 (DRTDEADAEERGPEENYS) and 415 to 428 (DGDHDNDKESDVEI). The disordered stretch occupies residues 388-428 (DRTDEADAEERGPEENYSRPEAPNEFYDGDHDNDKESDVEI). At serine 424 the chain carries Phosphoserine.

The protein belongs to the histone deacetylase family. HD type 1 subfamily. As to quaternary structure, interacts with HDAC7 and HDAC9. Interacts with DAXX, KDM4A, HDAC10 and DACH1. Found in a complex with NCOR1 and NCOR2. Component of the N-Cor repressor complex, at least composed of NCOR1, NCOR2, HDAC3, TBL1X, TBL1R, CORO2A and GPS2. Interacts with BCOR, MJD2A/JHDM3A, NRIP1, PRDM6 and SRY. Interacts with BTBD14B. Interacts with GLIS2. Interacts (via the DNA-binding domain) with NR2C1; the interaction recruits phosphorylated NR2C1 to PML bodies for sumoylation. Component of the Notch corepressor complex. Interacts with CBFA2T3 and NKAP. Interacts with APEX1; the interaction is not dependent on the acetylated status of APEX1. Interacts with ZMYND15. Interacts with SMRT/NCOR2 and BCL6 on DNA enhancer elements. Interacts with INSM1. Interacts with XBP1 isoform 1; the interaction occurs in endothelial cell (EC) under disturbed flow. Interacts (via C-terminus) with CCAR2 (via N-terminus). Interacts with and deacetylates MEF2D. Interacts with BEND3. Interacts with NKAPL. Interacts with DHX36; this interaction occurs in a RNA-dependent manner. Interacts weakly with CRY1; this interaction is enhanced in the presence of FBXL3. Interacts with FBXL3 and BMAL1. Interacts with NCOR1. Interacts with RARA. Interacts with SETD5. Post-translationally, sumoylated in vitro. Deubiquitinated on 'Lys-63'-linked ubiquitin chains by USP38; leading to a decreased level of histone acetylation.

The protein localises to the nucleus. It localises to the chromosome. Its subcellular location is the cytoplasm. The protein resides in the cytosol. The enzyme catalyses N(6)-acetyl-L-lysyl-[histone] + H2O = L-lysyl-[histone] + acetate. The catalysed reaction is N(6)-acetyl-L-lysyl-[protein] + H2O = L-lysyl-[protein] + acetate. It carries out the reaction N(6)-(2E)-butenoyl-L-lysyl-[protein] + H2O = (2E)-2-butenoate + L-lysyl-[protein]. It catalyses the reaction N(6)-(2-hydroxyisobutanoyl)-L-lysyl-[protein] + H2O = 2-hydroxy-2-methylpropanoate + L-lysyl-[protein]. The enzyme catalyses N(6)-[(S)-lactoyl]-L-lysyl-[protein] + H2O = (S)-lactate + L-lysyl-[protein]. With respect to regulation, inositol tetraphosphate (1D-myo-inositol 1,4,5,6-tetrakisphosphate) promotes the histone deacetylase activity by acting as an intermolecular glue between HDAC3 and NCOR2, thereby promoting its association with the N-Cor complex, a prerequisite for the histone deacetylase activity. Functionally, histone deacetylase that catalyzes the deacetylation of lysine residues on the N-terminal part of the core histones (H2A, H2B, H3 and H4), and some other non-histone substrates. Histone deacetylation gives a tag for epigenetic repression and plays an important role in transcriptional regulation, cell cycle progression and developmental events. Histone deacetylases act via the formation of large multiprotein complexes, such as N-Cor repressor complex, which activate the histone deacetylase activity. Participates in the BCL6 transcriptional repressor activity by deacetylating the H3 'Lys-27' (H3K27) on enhancer elements, antagonizing EP300 acetyltransferase activity and repressing proximal gene expression. Acts as a molecular chaperone for shuttling phosphorylated NR2C1 to PML bodies for sumoylation. Contributes, together with XBP1 isoform 1, to the activation of NFE2L2-mediated HMOX1 transcription factor gene expression in a PI(3)K/mTORC2/Akt-dependent signaling pathway leading to endothelial cell (EC) survival under disturbed flow/oxidative stress. Regulates both the transcriptional activation and repression phases of the circadian clock in a deacetylase activity-independent manner. During the activation phase, promotes the accumulation of ubiquitinated BMAL1 at the E-boxes and during the repression phase, blocks FBXL3-mediated CRY1/2 ubiquitination and promotes the interaction of CRY1 and BMAL1. The NCOR1-HDAC3 complex regulates the circadian expression of the core clock gene BMAL1 and the genes involved in lipid metabolism in the liver. Also functions as deacetylase for non-histone targets, such as KAT5, MEF2D, MAPK14, RARA and STAT3. Serves as a corepressor of RARA, mediating its deacetylation and repression, leading to inhibition of RARE DNA element binding. In addition to protein deacetylase activity, also acts as a protein-lysine deacylase by recognizing other acyl groups: catalyzes removal of (2E)-butenoyl (crotonyl), lactoyl (lactyl) and 2-hydroxyisobutanoyl (2-hydroxyisobutyryl) acyl groups from lysine residues, leading to protein decrotonylation, delactylation and de-2-hydroxyisobutyrylation, respectively. Catalyzes decrotonylation of MAPRE1/EB1. Mediates delactylation NBN/NBS1, thereby inhibiting DNA double-strand breaks (DSBs) via homologous recombination (HR). This is Histone deacetylase 3 from Mus musculus (Mouse).